We begin with the raw amino-acid sequence, 60 residues long: Protein translocase subunit SecE (60 aa).

A helical transmembrane segment spans residues 31-51 (VIVVSTVIFFLVFFYALDLGI).

It belongs to the SecE/SEC61-gamma family. In terms of assembly, component of the Sec protein translocase complex. Heterotrimer consisting of SecY, SecE and SecG subunits. The heterotrimers can form oligomers, although 1 heterotrimer is thought to be able to translocate proteins. Interacts with the ribosome. Interacts with SecDF, and other proteins may be involved. Interacts with SecA.

The protein localises to the cell membrane. Functionally, essential subunit of the Sec protein translocation channel SecYEG. Clamps together the 2 halves of SecY. May contact the channel plug during translocation. The sequence is that of Protein translocase subunit SecE from Staphylococcus aureus (strain Mu50 / ATCC 700699).